We begin with the raw amino-acid sequence, 300 residues long: Acetylglutamate kinase (300 aa).

Substrate is bound by residues 73–74 (GG), R95, and N197.

This sequence belongs to the acetylglutamate kinase family. ArgB subfamily.

The protein resides in the cytoplasm. It catalyses the reaction N-acetyl-L-glutamate + ATP = N-acetyl-L-glutamyl 5-phosphate + ADP. It functions in the pathway amino-acid biosynthesis; L-arginine biosynthesis; N(2)-acetyl-L-ornithine from L-glutamate: step 2/4. In terms of biological role, catalyzes the ATP-dependent phosphorylation of N-acetyl-L-glutamate. The chain is Acetylglutamate kinase from Bordetella petrii (strain ATCC BAA-461 / DSM 12804 / CCUG 43448).